The primary structure comprises 199 residues: uncharacterized protein (199 aa).

The next 3 helical transmembrane spans lie at 22 to 44 (VVVV…YLFL), 65 to 87 (TGFI…HLAL), and 91 to 108 (HTIT…FFFW).

It belongs to the ycf1 family.

It localises to the mitochondrion membrane. This is an uncharacterized protein from Arabidopsis thaliana (Mouse-ear cress).